Reading from the N-terminus, the 62-residue chain is Venom protein 51.1 (62 aa).

Positions 1 to 25 are cleaved as a signal peptide; sequence MKFFGILLIVTMVVLVMIATTYVES. 3 cysteine pairs are disulfide-bonded: Cys-32–Cys-53, Cys-39–Cys-58, and Cys-43–Cys-60.

Expressed by the venom gland.

The protein resides in the secreted. Functionally, neurotoxin. Decreases the action potential of myelinated nerves in mice and frogs. In Lychas mucronatus (Chinese swimming scorpion), this protein is Venom protein 51.1.